The primary structure comprises 59 residues: Sec-independent protein translocase protein TatA (59 aa).

The chain crosses the membrane as a helical span at residues 1 to 21 (MGRLGLTEILVIVGIVILLFG).

This sequence belongs to the TatA/E family. Forms a complex with TatC.

The protein localises to the cell inner membrane. Part of the twin-arginine translocation (Tat) system that transports large folded proteins containing a characteristic twin-arginine motif in their signal peptide across membranes. TatA could form the protein-conducting channel of the Tat system. This is Sec-independent protein translocase protein TatA from Flavobacterium johnsoniae (strain ATCC 17061 / DSM 2064 / JCM 8514 / BCRC 14874 / CCUG 350202 / NBRC 14942 / NCIMB 11054 / UW101) (Cytophaga johnsonae).